Reading from the N-terminus, the 208-residue chain is Small ribosomal subunit protein uS4 (208 aa).

An S4 RNA-binding domain is found at 98–168; it reads RRLDNVVFRL…DSLDTVVRRG (71 aa).

It belongs to the universal ribosomal protein uS4 family. In terms of assembly, part of the 30S ribosomal subunit. Contacts protein S5. The interaction surface between S4 and S5 is involved in control of translational fidelity.

Its function is as follows. One of the primary rRNA binding proteins, it binds directly to 16S rRNA where it nucleates assembly of the body of the 30S subunit. Functionally, with S5 and S12 plays an important role in translational accuracy. The sequence is that of Small ribosomal subunit protein uS4 from Desulforapulum autotrophicum (strain ATCC 43914 / DSM 3382 / VKM B-1955 / HRM2) (Desulfobacterium autotrophicum).